Consider the following 724-residue polypeptide: Catalase-peroxidase (724 aa).

Residues Trp98 to Tyr226 constitute a cross-link (tryptophyl-tyrosyl-methioninium (Trp-Tyr) (with M-252)). His99 (proton acceptor) is an active-site residue. The tryptophyl-tyrosyl-methioninium (Tyr-Met) (with W-98) cross-link spans Tyr226–Met252. His267 contributes to the heme b binding site.

This sequence belongs to the peroxidase family. Peroxidase/catalase subfamily. As to quaternary structure, homodimer or homotetramer. It depends on heme b as a cofactor. Formation of the three residue Trp-Tyr-Met cross-link is important for the catalase, but not the peroxidase activity of the enzyme.

The enzyme catalyses H2O2 + AH2 = A + 2 H2O. It catalyses the reaction 2 H2O2 = O2 + 2 H2O. Its function is as follows. Bifunctional enzyme with both catalase and broad-spectrum peroxidase activity. The protein is Catalase-peroxidase of Vibrio cholerae serotype O1 (strain ATCC 39541 / Classical Ogawa 395 / O395).